A 226-amino-acid chain; its full sequence is Fibronectin type III domain-containing protein 9 (226 aa).

The Fibronectin type-III domain maps to 1 to 101 (MNIEVGNVSH…FHTLDKSPLA (101 aa)). The chain crosses the membrane as a helical span at residues 113–133 (LWVLMAILLACFTAVLAFICL).

It is found in the membrane. This chain is Fibronectin type III domain-containing protein 9 (Fndc9), found in Mus musculus (Mouse).